The following is a 207-amino-acid chain: LysM and putative peptidoglycan-binding domain-containing protein 2 (207 aa).

In terms of domain architecture, LysM spans 61 to 105; it reads IEHRLSPSDTLQGIALKYGVTMEQIKRANKLFSTDCIFLRKSLNI. A disordered region spans residues 186-207; it reads AQRLKEEDLRHDDSYATCSYQH. Basic and acidic residues predominate over residues 188–199; the sequence is RLKEEDLRHDDS.

This is LysM and putative peptidoglycan-binding domain-containing protein 2 (lysmd2) from Xenopus tropicalis (Western clawed frog).